The following is a 441-amino-acid chain: Glutamate--tRNA ligase 1 (441 aa).

The 'HIGH' region signature appears at 8–18; sequence PSPTGHIHVGN. Positions 239–243 match the 'KMSKS' region motif; the sequence is ELSKR. ATP is bound at residue Lys242.

Belongs to the class-I aminoacyl-tRNA synthetase family. Glutamate--tRNA ligase type 1 subfamily. In terms of assembly, monomer.

The protein localises to the cytoplasm. It carries out the reaction tRNA(Glu) + L-glutamate + ATP = L-glutamyl-tRNA(Glu) + AMP + diphosphate. Functionally, catalyzes the attachment of glutamate to tRNA(Glu) in a two-step reaction: glutamate is first activated by ATP to form Glu-AMP and then transferred to the acceptor end of tRNA(Glu). The polypeptide is Glutamate--tRNA ligase 1 (Paracoccus denitrificans (strain Pd 1222)).